Consider the following 166-residue polypeptide: EndA-like protein (166 aa).

The protein belongs to the tRNA-intron endonuclease family. Archaeal short subfamily.

The sequence is that of EndA-like protein from Methanopyrus kandleri (strain AV19 / DSM 6324 / JCM 9639 / NBRC 100938).